The primary structure comprises 477 residues: Protein translocase subunit SecY (477 aa).

A run of 10 helical transmembrane segments spans residues 28 to 48 (FMIS…LAII), 67 to 89 (FFSL…AVGI), 130 to 150 (IITL…ATNS), 165 to 185 (DFVA…VFLG), 196 to 216 (GITL…FIAA), 234 to 254 (AISF…TTFI), 286 to 306 (SAGV…VTIA), 329 to 349 (GIVL…YIQI), 387 to 407 (FIGA…SALI), and 413 to 433 (LSLG…FMSA).

Belongs to the SecY/SEC61-alpha family. As to quaternary structure, component of the Sec protein translocase complex. Heterotrimer consisting of SecY, SecE and SecG subunits. The heterotrimers can form oligomers, although 1 heterotrimer is thought to be able to translocate proteins. Interacts with the ribosome. Interacts with SecDF, and other proteins may be involved. Interacts with SecA.

The protein localises to the cell membrane. Its function is as follows. The central subunit of the protein translocation channel SecYEG. Consists of two halves formed by TMs 1-5 and 6-10. These two domains form a lateral gate at the front which open onto the bilayer between TMs 2 and 7, and are clamped together by SecE at the back. The channel is closed by both a pore ring composed of hydrophobic SecY resides and a short helix (helix 2A) on the extracellular side of the membrane which forms a plug. The plug probably moves laterally to allow the channel to open. The ring and the pore may move independently. This Mycoplasma pneumoniae (strain ATCC 29342 / M129 / Subtype 1) (Mycoplasmoides pneumoniae) protein is Protein translocase subunit SecY.